The following is a 409-amino-acid chain: bZIP transcription factor 16 (409 aa).

Over residues 1–16 the composition is skewed to basic and acidic residues; it reads MASNEMEKSSKEKEPK. Disordered regions lie at residues 1 to 63, 118 to 236, 274 to 327, and 362 to 409; these read MASN…VASS, NGMT…LPVS, MHGK…LRKQ, and TTEN…KDST. Residues 24 to 34 show a composition bias toward low complexity; that stretch reads APPSSQEPSSA. Positions 133-145 are enriched in basic and acidic residues; sequence GDAKQSEVKEKLP. Positions 152–178 are enriched in polar residues; it reads SLGSLNMITGKNNEPGKNSGASANGAY. The span at 179–203 shows a compositional bias: low complexity; that stretch reads SKSGESASDGSSEGSDGNSQNDSGS. The span at 216-228 shows a compositional bias: polar residues; it reads NGGSANGPQNGSA. Residues 305–368 enclose the bZIP domain; sequence ELKRQRRKQS…EELTTENTSL (64 aa). The short motif at 307–323 is the Bipartite nuclear localization signal element; sequence KRQRRKQSNRESARRSR. Residues 307-326 are basic motif; it reads KRQRRKQSNRESARRSRLRK. Residues 314–327 are compositionally biased toward basic and acidic residues; sequence SNRESARRSRLRKQ. The interval 333–368 is leucine-zipper; that stretch reads LAQRAEVLNEENTNLRAEINKLKSQCEELTTENTSL. The span at 398–409 shows a compositional bias: basic and acidic residues; the sequence is AERKVDSYKDST.

This sequence belongs to the bZIP family. Monomer, homodimer and heterodimers with BZIP68 and GBF1/BZIP41. Heterodimers with GBF2/BZIP54 and GBF3/BZIP55. Binds DNA as monomer and forms homo- and heterodimers. The monomeric form is redox regulated. Interacts with GIP1.

It localises to the nucleus. Its function is as follows. Transcriptional activator that binds to the G-box motif (5'-CACGTG-3') and other cis-acting elements with 5'-ACGT-3' core, such as Hex, C-box and as-1 motifs. Possesses high binding affinity to G-box, much lower affinity to Hex and C-box, and little affinity to as-1 element. G-box and G-box-like motifs are cis-acting elements defined in promoters of certain plant genes which are regulated by such diverse stimuli as light-induction or hormone control. Binds to the G-box motif 5'-CACGTG-3' of LHCB2.4 (At3g27690) promoter. May act as transcriptional repressor in light-regulated expression of LHCB2.4. Binds DNA as monomer. DNA-binding activity is redox-dependent. The chain is bZIP transcription factor 16 from Arabidopsis thaliana (Mouse-ear cress).